We begin with the raw amino-acid sequence, 238 residues long: Cysteine-rich venom protein (238 aa).

An N-terminal signal peptide occupies residues 1–19; sequence MIAFIVLLSLAAVLQQSSG. The SCP domain maps to 38-164; the sequence is VDKHNALRRS…STKYLYVCQY (127 aa). Cystine bridges form between Cys-75–Cys-153, Cys-92–Cys-165, Cys-148–Cys-162, Cys-184–Cys-191, Cys-187–Cys-196, Cys-200–Cys-233, Cys-209–Cys-227, and Cys-218–Cys-231. A ShKT domain is found at 200–233; the sequence is CKYEDAFTNCKALAKKTKCKTEWIKSKCPATCFC.

The protein belongs to the CRISP family. In terms of tissue distribution, expressed by the venom gland.

The protein localises to the secreted. Functionally, blocks contraction of smooth muscle elicited by high potassium-induced depolarization, but does not block caffeine-stimulated contraction. May target voltage-gated calcium channels on smooth muscle. The protein is Cysteine-rich venom protein of Austrelaps superbus (Lowland copperhead snake).